The following is a 306-amino-acid chain: Protoheme IX farnesyltransferase (306 aa).

The next 8 membrane-spanning stretches (helical) occupy residues 31–50 (VIEL…QGGW), 55–77 (LILG…NCYI), 104–124 (LVFA…ISNW), 125–145 (LAAA…TLWL), 168–188 (WAAV…IVFL), 218–235 (GRAA…ATLA), 238–258 (LLLI…LAGG), and 286–306 (ASIS…LLPF).

This sequence belongs to the UbiA prenyltransferase family. Protoheme IX farnesyltransferase subfamily.

It is found in the cell membrane. The enzyme catalyses heme b + (2E,6E)-farnesyl diphosphate + H2O = Fe(II)-heme o + diphosphate. Its pathway is porphyrin-containing compound metabolism; heme O biosynthesis; heme O from protoheme: step 1/1. In terms of biological role, converts heme B (protoheme IX) to heme O by substitution of the vinyl group on carbon 2 of heme B porphyrin ring with a hydroxyethyl farnesyl side group. The polypeptide is Protoheme IX farnesyltransferase (Clavibacter sepedonicus (Clavibacter michiganensis subsp. sepedonicus)).